The sequence spans 273 residues: MIERPVPGADAPIGIFDSGVGGLTVARTIIDQLPHESVIYIGDTANGPYGPLPIAKVREHAIRIADELVERGCKMIVIACNTASAAFLRDARERYSVPVVEVILPAVRRAVASTRNGKVGVIGTVGTINSGAYQDLFSASPSIVVNAVACPRFVDFVERGITSGRQILNIAQDYLEPLQAEGVDTLVLGCTHYPLLSGVIQLAMGDHVSLVSSAEETAKDVLRILSQQDLLADPDMHPEPSYSFESTGDPEIFAQLSRRFLGPIVSQVRQNEG.

Substrate-binding positions include D17–S18 and Y49–G50. The active-site Proton donor/acceptor is the C80. N81–T82 contacts substrate. The active-site Proton donor/acceptor is C190. T191–H192 contacts substrate.

It belongs to the aspartate/glutamate racemases family.

It catalyses the reaction L-glutamate = D-glutamate. Its pathway is cell wall biogenesis; peptidoglycan biosynthesis. In terms of biological role, provides the (R)-glutamate required for cell wall biosynthesis. This Corynebacterium glutamicum (strain ATCC 13032 / DSM 20300 / JCM 1318 / BCRC 11384 / CCUG 27702 / LMG 3730 / NBRC 12168 / NCIMB 10025 / NRRL B-2784 / 534) protein is Glutamate racemase.